A 284-amino-acid polypeptide reads, in one-letter code: MSMLPSFGFTQEQVACVCEVLQQGGNLERLGRFLWSLPACDHLHKNESVLKAKAVVAFHRGNFRELYKILESHQFSPHNHPKLQQLWLKAHYIEAEKLRGRPLGAVGKYRVRRKFPLPRTIWDGEETSYCFKEKSRGVLREWYTHNPYPSPREKRELAEATGLTTTQVSNWFKNRRQRDRAAEAKERENSENNNTGANKQNQLSPLDGGKSLMSSSEDEFSPPQSPDQNSVLLLQGNMSHPGASAYSMTGLGAAQSVHGMQGHPHQLQDSLLGPLTSSLVDLGS.

Residues 124 to 183 (GEETSYCFKEKSRGVLREWYTHNPYPSPREKRELAEATGLTTTQVSNWFKNRRQRDRAAE) constitute a DNA-binding region (homeobox). Residues 167–238 (QVSNWFKNRR…NSVLLLQGNM (72 aa)) form a disordered region. Positions 179 to 190 (DRAAEAKERENS) are enriched in basic and acidic residues. 2 stretches are compositionally biased toward polar residues: residues 191 to 204 (ENNN…NQLS) and 226 to 238 (PDQN…QGNM).

This sequence belongs to the SIX/Sine oculis homeobox family. In terms of assembly, interacts with eya1.

The protein resides in the nucleus. It localises to the cytoplasm. Transcription factor that is involved in the regulation of cell proliferation, apoptosis and embryonic development. Depending on context, functions as a transcriptional repressor or activator. Transcriptional activation is enhanced by eya1 (in vitro). Plays an important role in the development of the inner ear, where it promotes hair cell proliferation and inhibits proliferation of neural progenitor cells. Required for normal myogenesis. Plays a role in the development of fast muscle fibers throughout the body, as well as the development of craniofacial muscles. Required for normal expression of myod1 and myog during myogenesis. This chain is Homeobox protein six1b (six1b), found in Danio rerio (Zebrafish).